The chain runs to 209 residues: Translation initiation factor IF-3 (209 aa).

Belongs to the IF-3 family. In terms of assembly, monomer.

It is found in the cytoplasm. Functionally, IF-3 binds to the 30S ribosomal subunit and shifts the equilibrium between 70S ribosomes and their 50S and 30S subunits in favor of the free subunits, thus enhancing the availability of 30S subunits on which protein synthesis initiation begins. The protein is Translation initiation factor IF-3 of Chlorobium phaeobacteroides (strain DSM 266 / SMG 266 / 2430).